We begin with the raw amino-acid sequence, 161 residues long: Nucleotide-binding protein Tcr_1902 (161 aa).

The protein belongs to the YajQ family.

Nucleotide-binding protein. This Hydrogenovibrio crunogenus (strain DSM 25203 / XCL-2) (Thiomicrospira crunogena) protein is Nucleotide-binding protein Tcr_1902.